Consider the following 785-residue polypeptide: Endonuclease MutS2 (785 aa).

331-338 (GPNTGGKT) contacts ATP. The Smr domain maps to 710 to 785 (LDLRGLYADE…GLGVTVVELA (76 aa)).

It belongs to the DNA mismatch repair MutS family. MutS2 subfamily. Homodimer. Binds to stalled ribosomes, contacting rRNA.

Its function is as follows. Endonuclease that is involved in the suppression of homologous recombination and thus may have a key role in the control of bacterial genetic diversity. Acts as a ribosome collision sensor, splitting the ribosome into its 2 subunits. Detects stalled/collided 70S ribosomes which it binds and splits by an ATP-hydrolysis driven conformational change. Acts upstream of the ribosome quality control system (RQC), a ribosome-associated complex that mediates the extraction of incompletely synthesized nascent chains from stalled ribosomes and their subsequent degradation. Probably generates substrates for RQC. In Pelotomaculum thermopropionicum (strain DSM 13744 / JCM 10971 / SI), this protein is Endonuclease MutS2.